Consider the following 148-residue polypeptide: Male-specific protein scotti (148 aa).

A disordered region spans residues 56-78; that stretch reads PQEPPLGVFPAQGGPNGPPRLRK. Asn129 carries an N-linked (GlcNAc...) asparagine glycan.

It belongs to the male-specific scotti family.

Functionally, post-meiotically transcribed gene that has a role in late spermiogenesis; required for actin cone progression during spermatid individualization. This chain is Male-specific protein scotti, found in Drosophila sechellia (Fruit fly).